Reading from the N-terminus, the 178-residue chain is Interleukin-10 (178 aa).

The N-terminal stretch at 1–18 is a signal peptide; sequence MHSSALLCCLVLLTGVRA. Intrachain disulfides connect cysteine 30-cysteine 126 and cysteine 80-cysteine 132. N-linked (GlcNAc...) asparagine glycosylation is present at asparagine 134.

The protein belongs to the IL-10 family. Homodimer. Interacts with IL10RA and IL10RB. Produced by a variety of cell lines, including T-cells, macrophages, mast cells and other cell types.

Its subcellular location is the secreted. Major immune regulatory cytokine that acts on many cells of the immune system where it has profound anti-inflammatory functions, limiting excessive tissue disruption caused by inflammation. Mechanistically, IL10 binds to its heterotetrameric receptor comprising IL10RA and IL10RB leading to JAK1 and STAT2-mediated phosphorylation of STAT3. In turn, STAT3 translocates to the nucleus where it drives expression of anti-inflammatory mediators. Targets antigen-presenting cells (APCs) such as macrophages and monocytes and inhibits their release of pro-inflammatory cytokines including granulocyte-macrophage colony-stimulating factor /GM-CSF, granulocyte colony-stimulating factor/G-CSF, IL-1 alpha, IL-1 beta, IL-6, IL-8 and TNF-alpha. Also interferes with antigen presentation by reducing the expression of MHC-class II and co-stimulatory molecules, thereby inhibiting their ability to induce T cell activation. In addition, controls the inflammatory response of macrophages by reprogramming essential metabolic pathways including mTOR signaling. This is Interleukin-10 (IL10) from Homo sapiens (Human).